Here is a 429-residue protein sequence, read N- to C-terminus: Alpha-galactosidase A (429 aa).

The N-terminal stretch at 1–31 is a signal peptide; it reads MQLRNPELHLGCALALRFLALVSWDIPGARA. 2 cysteine pairs are disulfide-bonded: cysteine 52–cysteine 94 and cysteine 56–cysteine 63. The N-linked (GlcNAc...) asparagine glycan is linked to asparagine 139. A disulfide bridge connects residues cysteine 142 and cysteine 172. Aspartate 170 acts as the Nucleophile in catalysis. Asparagine 192 is a glycosylation site (N-linked (GlcNAc...) asparagine). Cysteines 202 and 223 form a disulfide. A substrate-binding site is contributed by 203 to 207; that stretch reads EWPLY. N-linked (GlcNAc...) asparagine glycosylation is present at asparagine 215. The Proton donor role is filled by aspartate 231. The cysteines at positions 378 and 382 are disulfide-linked.

Belongs to the glycosyl hydrolase 27 family. Homodimer.

It localises to the lysosome. The enzyme catalyses Hydrolysis of terminal, non-reducing alpha-D-galactose residues in alpha-D-galactosides, including galactose oligosaccharides, galactomannans and galactolipids.. It catalyses the reaction a globoside Gb3Cer (d18:1(4E)) + H2O = a beta-D-Gal-(1-&gt;4)-beta-D-Glc-(1&lt;-&gt;1)-Cer(d18:1(4E)) + D-galactose. It carries out the reaction a globoside Gb3Cer + H2O = a beta-D-galactosyl-(1-&gt;4)-beta-D-glucosyl-(1&lt;-&gt;1)-ceramide + D-galactose. Its activity is regulated as follows. Galactosylgalactosylglucosylceramidase activity is stimulated by saposin B and ammonium chloride. Its function is as follows. Catalyzes the hydrolysis of glycosphingolipids and participates in their degradation in the lysosome. This Homo sapiens (Human) protein is Alpha-galactosidase A.